Reading from the N-terminus, the 512-residue chain is Cytochrome P450 monooxygenase astD (512 aa).

A helical membrane pass occupies residues 19–39 (MGISILVMLSTFLALGTIFVY). Asn191 and Asn413 each carry an N-linked (GlcNAc...) asparagine glycan. A heme-binding site is contributed by Cys449.

The protein belongs to the cytochrome P450 family. Requires heme as cofactor.

It is found in the membrane. The protein operates within secondary metabolite biosynthesis; terpenoid biosynthesis. Its function is as follows. Cytochrome P450 monooxygenase; part of the gene cluster that mediates the biosynthesis of astellolides, drimane-type sesquiterpene esters that show antimicrobial, anti-inflammatory, and anti-tumor activities. The first step in astellolide biosynthesis is performed by the sesquiterpene cyclase astC that catalyzes the formation of drimanyl pyrophosphate from farnesyl pyrophosphate. Drimanyl pyrophosphate is then dephosphorylated by the sesquiterpene phosphatase astI to produce drimanyl monophosphate which is further dephosphorylated to drim-8-ene-11-ol by atsK. Drim-8-ene-11-ol is converted to confertifolin, probably by the cytochrome P450 monooxygenase astD and/or the dehydrogenase astE. The cytochrome P450 monooxygenases astB, astF and astJ then hydroxylate confertifolin at C6, C14, or C15 to form trihydroxy confertifolin. The nonribosomal peptide synthetase astA catalyzes ester bond formation between trihydroxy contifolin and benzoic acid (BA) or 4-hydroxy benzoic acid (4HBA), leading to the formation of dideacetyl astellolides A and B, respectively. Finally, the O-acetyltransferase astG converts dideacetyl astellolides A and B into deacetyl astellolides A and B. This Aspergillus oryzae (strain ATCC 42149 / RIB 40) (Yellow koji mold) protein is Cytochrome P450 monooxygenase astD.